A 365-amino-acid polypeptide reads, in one-letter code: Bifunctional chorismate mutase/prephenate dehydratase (365 aa).

The 96-residue stretch at M1 to R96 folds into the Chorismate mutase domain. Substrate is bound by residues R11, R28, K39, and E57. The 176-residue stretch at V97–S272 folds into the Prephenate dehydratase domain. The ACT domain occupies S284–P361.

The protein resides in the cytoplasm. The catalysed reaction is chorismate = prephenate. It carries out the reaction prephenate + H(+) = 3-phenylpyruvate + CO2 + H2O. Its pathway is amino-acid biosynthesis; L-phenylalanine biosynthesis; phenylpyruvate from prephenate: step 1/1. It functions in the pathway metabolic intermediate biosynthesis; prephenate biosynthesis; prephenate from chorismate: step 1/1. Its function is as follows. Catalyzes the Claisen rearrangement of chorismate to prephenate and the decarboxylation/dehydration of prephenate to phenylpyruvate. This is Bifunctional chorismate mutase/prephenate dehydratase from Stutzerimonas stutzeri (Pseudomonas stutzeri).